The following is a 207-amino-acid chain: MTVANWQVRDLTLILRTGEMKSRLEQARTDFGALLSETVYFQPSAIRLGEFDDEYIHSRQELVYVYLREDIARQCALRRNLPSNSSNFGTMATAIPPWLMNARSLNRVMQERCDQGGLVNYYQGPHTNQFFLAIMPSNCFVRFGTDIINNENYGFXARRGNTLEEGEDDDDEMDDEGEAGGAEPRECQIGNLINYPIIALGSCDLSA.

The tract at residues 161–185 is disordered; the sequence is NTLEEGEDDDDEMDDEGEAGGAEPR. A compositionally biased stretch (acidic residues) spans 164–178; the sequence is EEGEDDDDEMDDEGE.

In terms of biological role, involved in tumor formation and increases auxin and cytokinin effects in host plants. The protein is Protein 6b (6b) of Agrobacterium tumefaciens (strain 15955).